Reading from the N-terminus, the 765-residue chain is 5-methyltetrahydropteroyltriglutamate--homocysteine methyltransferase 2 (765 aa).

K18 and N116 together coordinate 5-methyltetrahydropteroyltri-L-glutamate. L-homocysteine contacts are provided by residues 437–439 and E490; that span reads IGS. Residues 437 to 439 and E490 contribute to the L-methionine site; that span reads IGS. Residues D495, Y518, 521–522, and W567 each bind 5-methyltetrahydropteroyltri-L-glutamate; that span reads RC. Residue D605 coordinates L-homocysteine. D605 provides a ligand contact to L-methionine. Zn(2+) contacts are provided by H647, C649, H658, D662, and E671. H701 serves as the catalytic Proton donor. C733 contacts Zn(2+).

Belongs to the vitamin-B12 independent methionine synthase family. Requires Zn(2+) as cofactor. Expressed in leaves, stems and siliques.

The protein resides in the cytoplasm. The protein localises to the cytosol. The catalysed reaction is 5-methyltetrahydropteroyltri-L-glutamate + L-homocysteine = tetrahydropteroyltri-L-glutamate + L-methionine. Its pathway is amino-acid biosynthesis; L-methionine biosynthesis via de novo pathway; L-methionine from L-homocysteine (MetE route): step 1/1. Functionally, catalyzes the transfer of a methyl group from 5-methyltetrahydrofolate to homocysteine resulting in methionine formation. This is 5-methyltetrahydropteroyltriglutamate--homocysteine methyltransferase 2 (MS2) from Arabidopsis thaliana (Mouse-ear cress).